We begin with the raw amino-acid sequence, 500 residues long: E3 ubiquitin-protein ligase TRIM69 (500 aa).

The interval 1–152 is necessary for nuclear localization; the sequence is MEVSTNPSSN…SVGQSKEFLQ (152 aa). The RING-type zinc finger occupies 41 to 82; the sequence is CPLCNDWFRDPLMLSCGHNFCEACIQDFWRLQAKETFCPECK. Residues 161–255 are a coiled coil; it reads TEELAIQQGQ…QCLLAKDMLV (95 aa). In terms of domain architecture, B30.2/SPRY spans 305–500; it reads PIQYMVWREM…KEPLHILHPQ (196 aa). Serine 341 is subject to Phosphoserine.

The protein belongs to the TRIM/RBCC family. Homo-multimer; required for antiviral activity. Interacts with PML. In terms of processing, phosphorylated. Phosphorylation is necessary for nuclear localization.

The protein resides in the cytoplasm. It localises to the nucleus. It is found in the nucleus speckle. The protein localises to the cytoskeleton. Its subcellular location is the microtubule organizing center. The protein resides in the centrosome. It catalyses the reaction S-ubiquitinyl-[E2 ubiquitin-conjugating enzyme]-L-cysteine + [acceptor protein]-L-lysine = [E2 ubiquitin-conjugating enzyme]-L-cysteine + N(6)-ubiquitinyl-[acceptor protein]-L-lysine.. It participates in protein modification; protein ubiquitination. In terms of biological role, E3 ubiquitin ligase that plays an important role in antiviral immunity by restricting different viral infections including dengue virus or vesicular stomatitis indiana virus. Ubiquitinates viral proteins such as dengue virus NS3 thereby limiting infection. In addition, acts as a key mediator of type I interferon induced microtubule stabilization by directly associating to microtubules independently of its E3 ligase activity. Also plays a role in cataract formation together with TP53. Mechanistically, inhibits UVB-induced cell apoptosis and reactive oxygen species (ROS) production by inducing TP53 ubiquitination. Regulates centrosome dynamics and mitotic progression by ubiquitinating STK3/MST2; leading to its redistribution to the perinuclear cytoskeleton and subsequent phosphorylation by PLK1. In Homo sapiens (Human), this protein is E3 ubiquitin-protein ligase TRIM69 (TRIM69).